Here is a 247-residue protein sequence, read N- to C-terminus: 6-phosphogluconolactonase (247 aa).

The protein belongs to the glucosamine/galactosamine-6-phosphate isomerase family. 6-phosphogluconolactonase subfamily.

The enzyme catalyses 6-phospho-D-glucono-1,5-lactone + H2O = 6-phospho-D-gluconate + H(+). Its pathway is carbohydrate degradation; pentose phosphate pathway; D-ribulose 5-phosphate from D-glucose 6-phosphate (oxidative stage): step 2/3. Functionally, hydrolysis of 6-phosphogluconolactone to 6-phosphogluconate. This chain is 6-phosphogluconolactonase (pgl), found in Mycobacterium bovis (strain ATCC BAA-935 / AF2122/97).